Here is a 606-residue protein sequence, read N- to C-terminus: Zinc metalloproteinase-disintegrin-like HF3 (606 aa).

The N-terminal stretch at 1 to 20 (MIQVLLVTICLAAFPYQGSS) is a signal peptide. A propeptide spanning residues 21 to 190 (IILESGNVND…KKASQLVVTA (170 aa)) is cleaved from the precursor. The 197-residue stretch at 199-395 (KYIELVILAD…YKPQCILNEP (197 aa)) folds into the Peptidase M12B domain. E202 lines the Ca(2+) pocket. N-linked (GlcNAc...) asparagine glycosylation is present at N259. D286 is a Ca(2+) binding site. 3 disulfide bridges follow: C310-C390, C350-C374, and C352-C357. A glycan (N-linked (GlcNAc...) asparagine) is linked at N313. Residue H335 participates in Zn(2+) binding. E336 is an active-site residue. Zn(2+) contacts are provided by H339 and H345. An N-linked (GlcNAc...) asparagine glycan is attached at N373. Positions 390, 393, 405, 408, 410, 412, 415, and 418 each coordinate Ca(2+). A Disintegrin domain is found at 403–489 (PPVCGNELLE…DCPTDDFKRN (87 aa)). 14 disulfides stabilise this stretch: C406-C435, C417-C430, C419-C425, C429-C452, C443-C449, C448-C474, C461-C481, C468-C500, C493-C505, C512-C562, C527-C569, C540-C550, C557-C594, and C588-C599. A D/ECD-tripeptide motif is present at residues 467 to 469 (ECD). Residues D469, E472, and D484 each coordinate Ca(2+). A glycan (N-linked (GlcNAc...) asparagine) is linked at N519. An N-linked (GlcNAc...) asparagine glycan is attached at N584.

This sequence belongs to the venom metalloproteinase (M12B) family. P-III subfamily. P-IIIa sub-subfamily. Monomer. Requires Zn(2+) as cofactor. In terms of tissue distribution, expressed by the venom gland.

Its subcellular location is the secreted. Functionally, the metalloproteinase-disintegrin-like HF3 is a potent hemorrhagic toxin that activates macrophages for phagocytosis through integrin alpha-M/beta-2 (ITGAM/ITGB2). It inhibits collagen-induced platelet aggregation. This protein shows cleavage specificity for substrate for leucine at P1' position, followed by hydrophobic residues in P2'. The protein is Zinc metalloproteinase-disintegrin-like HF3 of Bothrops jararaca (Jararaca).